The following is a 206-amino-acid chain: dCTP deaminase, dUMP-forming (206 aa).

DCTP-binding positions include 117–122 (RSSFGR), D135, 143–145 (TLE), Q163, Y177, K184, and Q188. Catalysis depends on E145, which acts as the Proton donor/acceptor.

Belongs to the dCTP deaminase family. In terms of assembly, homotrimer.

The enzyme catalyses dCTP + 2 H2O = dUMP + NH4(+) + diphosphate. It functions in the pathway pyrimidine metabolism; dUMP biosynthesis; dUMP from dCTP: step 1/1. Its function is as follows. Bifunctional enzyme that catalyzes both the deamination of dCTP to dUTP and the hydrolysis of dUTP to dUMP without releasing the toxic dUTP intermediate. This is dCTP deaminase, dUMP-forming from Methanococcus maripaludis (strain C7 / ATCC BAA-1331).